Consider the following 1118-residue polypeptide: Isoleucine--tRNA ligase (1118 aa).

The short motif at 64-74 (PFANGLPHYGH) is the 'HIGH' region element. Positions 647–651 (KLSKR) match the 'KMSKS' region motif. Lys-650 serves as a coordination point for ATP.

The protein belongs to the class-I aminoacyl-tRNA synthetase family. IleS type 2 subfamily. Monomer. Zn(2+) serves as cofactor.

Its subcellular location is the cytoplasm. It carries out the reaction tRNA(Ile) + L-isoleucine + ATP = L-isoleucyl-tRNA(Ile) + AMP + diphosphate. Functionally, catalyzes the attachment of isoleucine to tRNA(Ile). As IleRS can inadvertently accommodate and process structurally similar amino acids such as valine, to avoid such errors it has two additional distinct tRNA(Ile)-dependent editing activities. One activity is designated as 'pretransfer' editing and involves the hydrolysis of activated Val-AMP. The other activity is designated 'posttransfer' editing and involves deacylation of mischarged Val-tRNA(Ile). This Ehrlichia ruminantium (strain Gardel) protein is Isoleucine--tRNA ligase.